The chain runs to 46 residues: Mu-segestritoxin-Sf1h (46 aa).

Cystine bridges form between C3–C19, C10–C22, C18–C42, and C24–C40. Positions 31–33 (RPW) are keys region for toxin activity.

It belongs to the neurotoxin 16 (SFI) family. In terms of tissue distribution, expressed by the venom gland.

The protein localises to the secreted. Its function is as follows. Insecticidal toxin. It inhibits insect voltage-gated sodium channels (Nav) by partially blocking the channel pore in DUM neurons from the American cockroach, not by acting as a gating modifier. The inhibition is only partially reversible after prolonged washout. In vivo, the toxin causes flaccid paralysis followed by death when injected into Heliothis virescens larvae. It also causes uncoordinated movements followed by full paralysis to sheep blowflies (Lucilia cuprina). When the toxin is fused to snowdrop lectin, it is orally active against larvae of the tomato moth (Laconobia oleracea), the rice brown planthopper (Nilaparvata lugens), and the peach-potato aphid (Myzus persicae). The sequence is that of Mu-segestritoxin-Sf1h from Segestria florentina (Tube-web spider).